The primary structure comprises 224 residues: Octanoyltransferase (224 aa).

The BPL/LPL catalytic domain maps to 38-213 (AETTDEVWLL…QFVRAAGFQS (176 aa)). Residues 77–84 (RGGQVTYH), 144–146 (SLG), and 157–159 (GLA) contribute to the substrate site. The active-site Acyl-thioester intermediate is C175.

It belongs to the LipB family.

Its subcellular location is the cytoplasm. The catalysed reaction is octanoyl-[ACP] + L-lysyl-[protein] = N(6)-octanoyl-L-lysyl-[protein] + holo-[ACP] + H(+). It functions in the pathway protein modification; protein lipoylation via endogenous pathway; protein N(6)-(lipoyl)lysine from octanoyl-[acyl-carrier-protein]: step 1/2. In terms of biological role, catalyzes the transfer of endogenously produced octanoic acid from octanoyl-acyl-carrier-protein onto the lipoyl domains of lipoate-dependent enzymes. Lipoyl-ACP can also act as a substrate although octanoyl-ACP is likely to be the physiological substrate. This is Octanoyltransferase from Hahella chejuensis (strain KCTC 2396).